The following is a 494-amino-acid chain: Alpha-amylase-related protein (494 aa).

Positions 1 to 20 (MFKFALALTLCLAGASLSLA) are cleaved as a signal peptide. Gln21 carries the pyrrolidone carboxylic acid modification. An intrachain disulfide couples Cys48 to Cys104. The Ca(2+) site is built by Asn118, Gln169, and Asp178. Cys157 and Cys171 are disulfide-bonded. Arg206 lines the chloride pocket. The active-site Nucleophile is the Asp208. His212 serves as a coordination point for Ca(2+). The active-site Proton donor is Glu245. Residues Asn308 and Arg343 each contribute to the chloride site. 3 disulfides stabilise this stretch: Cys376–Cys382, Cys418–Cys441, and Cys448–Cys460.

Belongs to the glycosyl hydrolase 13 family. In terms of assembly, monomer. Ca(2+) is required as a cofactor. It depends on chloride as a cofactor.

The protein localises to the secreted. It catalyses the reaction Endohydrolysis of (1-&gt;4)-alpha-D-glucosidic linkages in polysaccharides containing three or more (1-&gt;4)-alpha-linked D-glucose units.. This chain is Alpha-amylase-related protein (Amyrel), found in Drosophila dossoui (Fruit fly).